Consider the following 322-residue polypeptide: UDP-N-acetylenolpyruvoylglucosamine reductase (322 aa).

Residues 36 to 202 enclose the FAD-binding PCMH-type domain; sequence RAGGPAQVLF…TSVLFEGVPG (167 aa). The active site involves arginine 182. Catalysis depends on serine 231, which acts as the Proton donor. Residue glutamate 301 is part of the active site.

This sequence belongs to the MurB family. FAD serves as cofactor.

The protein resides in the cytoplasm. It carries out the reaction UDP-N-acetyl-alpha-D-muramate + NADP(+) = UDP-N-acetyl-3-O-(1-carboxyvinyl)-alpha-D-glucosamine + NADPH + H(+). Its pathway is cell wall biogenesis; peptidoglycan biosynthesis. In terms of biological role, cell wall formation. The sequence is that of UDP-N-acetylenolpyruvoylglucosamine reductase from Brucella suis biovar 1 (strain 1330).